A 565-amino-acid chain; its full sequence is Tyrosine-protein phosphatase non-receptor type 5 (565 aa).

A compositionally biased stretch (basic and acidic residues) spans 1–16 (MNYEGARSERENHAAD). Residues 1–80 (MNYEGARSER…KPPPRGAGSH (80 aa)) form a disordered region. Residues 56 to 75 (MPPPPPPSPPSDPAQKPPPR) are compositionally biased toward pro residues. The next 2 helical transmembrane spans lie at 88-108 (LCLFAASQFLLACGVLWFSGY) and 146-166 (LLLVFLSVGLVLVTTLVWHLL). The disordered stretch occupies residues 169–189 (PPEPPTPLPPEDRRQSVSRQP). Position 245 is a phosphoserine; by PKA (Ser-245). Thr-255 bears the Phosphothreonine; by MAPK mark. At Ser-268 the chain carries Phosphoserine; by MAPK. In terms of domain architecture, Tyrosine-protein phosphatase spans 300 to 555 (LQAEFFEIPM…QFVHHVMSLY (256 aa)). Substrate is bound by residues Asp-461, 496-502 (CSAGIGR), and Gln-540. Cys-496 functions as the Phosphocysteine intermediate in the catalytic mechanism.

The protein belongs to the protein-tyrosine phosphatase family. Non-receptor class subfamily. Phosphorylation at Ser-245 by PKA deactivates PTPN5. Phosphorylation at Thr-255 and Ser-268 by MAPKs stabilizes the phosphatase, dephosphorylation of these sites results in ubiquitin-mediated degradation of the active phosphatase.

The protein localises to the endoplasmic reticulum membrane. It carries out the reaction O-phospho-L-tyrosyl-[protein] + H2O = L-tyrosyl-[protein] + phosphate. Its function is as follows. May regulate the activity of several effector molecules involved in synaptic plasticity and neuronal cell survival, including MAPKs, Src family kinases and NMDA receptors. The polypeptide is Tyrosine-protein phosphatase non-receptor type 5 (PTPN5) (Homo sapiens (Human)).